Reading from the N-terminus, the 361-residue chain is Ribosomal RNA large subunit methyltransferase M (361 aa).

S-adenosyl-L-methionine contacts are provided by residues Ser187, 220–223 (CPGG), Asp239, Asp259, and Asp276. Residue Lys305 is the Proton acceptor of the active site.

This sequence belongs to the class I-like SAM-binding methyltransferase superfamily. RNA methyltransferase RlmE family. RlmM subfamily. As to quaternary structure, monomer.

It is found in the cytoplasm. The catalysed reaction is cytidine(2498) in 23S rRNA + S-adenosyl-L-methionine = 2'-O-methylcytidine(2498) in 23S rRNA + S-adenosyl-L-homocysteine + H(+). In terms of biological role, catalyzes the 2'-O-methylation at nucleotide C2498 in 23S rRNA. This is Ribosomal RNA large subunit methyltransferase M from Shewanella sp. (strain W3-18-1).